We begin with the raw amino-acid sequence, 426 residues long: UPF0229 protein YeaH (426 aa).

Over residues 78–92 (GNDHFIQNDRIERPQ) the composition is skewed to basic and acidic residues. Residues 78 to 108 (GNDHFIQNDRIERPQDGGGSGSGNGQASQDG) are disordered.

Belongs to the UPF0229 family.

The polypeptide is UPF0229 protein YeaH (Salmonella arizonae (strain ATCC BAA-731 / CDC346-86 / RSK2980)).